The primary structure comprises 452 residues: Eukaryotic translation initiation factor 4B3 (452 aa).

Alanine 2 carries the N-acetylalanine modification. Residues glutamate 20–valine 282 form a disordered region. Polar residues predominate over residues glutamine 28–serine 37. Basic and acidic residues predominate over residues proline 98 to lysine 110. Residues leucine 111–arginine 122 are compositionally biased toward gly residues. Low complexity predominate over residues glutamate 126–arginine 136. Positions valine 137–arginine 156 are enriched in basic and acidic residues. 2 consecutive short sequence motifs (nuclear localization signal) follow at residues alanine 172 to asparagine 179 and proline 215 to asparagine 222. Positions aspartate 227–aspartate 243 are enriched in basic and acidic residues. Phosphoserine occurs at positions 234, 270, and 300. Positions glycine 265–arginine 280 are enriched in low complexity. Positions alanine 349–isoleucine 452 are disordered. Over residues glycine 369–histidine 386 the composition is skewed to basic and acidic residues. A compositionally biased stretch (acidic residues) spans serine 387–alanine 397. Basic and acidic residues-rich tracts occupy residues glycine 400–glutamate 419 and glutamate 441–isoleucine 452.

It belongs to the eIF-4 subunit B family. Homodimer. Nonspherical monomer. mRNA-discriminating component of initiation complexes. Interacts with MAD2. Post-translationally, phosphorylated.

It is found in the nucleus. Promotes the eIF4F and eIF4A RNA-dependent ATP-hydrolysis activity with different efficiency depending on mRNAs, thus providing mRNA discrimination during initiation of translation. The sequence is that of Eukaryotic translation initiation factor 4B3 from Arabidopsis thaliana (Mouse-ear cress).